Here is a 1073-residue protein sequence, read N- to C-terminus: Carbamoyl phosphate synthase large chain (1073 aa).

Positions 1 to 399 are carboxyphosphate synthetic domain; that stretch reads MPKREDIKKV…SLLKAFKSLD (399 aa). Residues Arg-129, Arg-169, Gly-175, Gly-176, Glu-208, Val-210, Glu-215, Gly-241, Val-242, His-243, Gln-284, and Glu-296 each coordinate ATP. In terms of domain architecture, ATP-grasp 1 spans 133–325; sequence KETMLSIGEK…IARVTAKIAI (193 aa). Mg(2+)-binding residues include Gln-284, Glu-296, and Asn-298. Mn(2+)-binding residues include Gln-284, Glu-296, and Asn-298. The interval 400–540 is oligomerization domain; it reads IDNQLGIKRW…YSTYEDTCET (141 aa). The interval 541 to 931 is carbamoyl phosphate synthetic domain; sequence NSTDKKKILI…YKAELAADNL (391 aa). The region spanning 672–863 is the ATP-grasp 2 domain; the sequence is YLLMQELGIP…LAKIAAKVIA (192 aa). Residues Arg-708, Asp-747, Leu-749, Glu-754, Gly-779, Val-780, His-781, Ser-782, Gln-822, and Glu-834 each coordinate ATP. Positions 822, 834, and 836 each coordinate Mg(2+). Residues Gln-822, Glu-834, and Asn-836 each coordinate Mn(2+). The MGS-like domain maps to 930-1071; that stretch reads NLLPLTGKVF…NEYHKEMEQK (142 aa). The allosteric domain stretch occupies residues 932–1073; it reads LPLTGKVFLS…YHKEMEQKEE (142 aa).

This sequence belongs to the CarB family. As to quaternary structure, composed of two chains; the small (or glutamine) chain promotes the hydrolysis of glutamine to ammonia, which is used by the large (or ammonia) chain to synthesize carbamoyl phosphate. Tetramer of heterodimers (alpha,beta)4. The cofactor is Mg(2+). Mn(2+) is required as a cofactor.

It catalyses the reaction hydrogencarbonate + L-glutamine + 2 ATP + H2O = carbamoyl phosphate + L-glutamate + 2 ADP + phosphate + 2 H(+). It carries out the reaction hydrogencarbonate + NH4(+) + 2 ATP = carbamoyl phosphate + 2 ADP + phosphate + 2 H(+). It participates in amino-acid biosynthesis; L-arginine biosynthesis; carbamoyl phosphate from bicarbonate: step 1/1. The protein operates within pyrimidine metabolism; UMP biosynthesis via de novo pathway; (S)-dihydroorotate from bicarbonate: step 1/3. Its function is as follows. Large subunit of the glutamine-dependent carbamoyl phosphate synthetase (CPSase). CPSase catalyzes the formation of carbamoyl phosphate from the ammonia moiety of glutamine, carbonate, and phosphate donated by ATP, constituting the first step of 2 biosynthetic pathways, one leading to arginine and/or urea and the other to pyrimidine nucleotides. The large subunit (synthetase) binds the substrates ammonia (free or transferred from glutamine from the small subunit), hydrogencarbonate and ATP and carries out an ATP-coupled ligase reaction, activating hydrogencarbonate by forming carboxy phosphate which reacts with ammonia to form carbamoyl phosphate. This chain is Carbamoyl phosphate synthase large chain, found in Methanosarcina mazei (strain ATCC BAA-159 / DSM 3647 / Goe1 / Go1 / JCM 11833 / OCM 88) (Methanosarcina frisia).